A 275-amino-acid chain; its full sequence is 2,3,4,5-tetrahydropyridine-2,6-dicarboxylate N-succinyltransferase (275 aa).

Substrate-binding residues include R106 and D143.

This sequence belongs to the transferase hexapeptide repeat family. Homotrimer.

The protein localises to the cytoplasm. It catalyses the reaction (S)-2,3,4,5-tetrahydrodipicolinate + succinyl-CoA + H2O = (S)-2-succinylamino-6-oxoheptanedioate + CoA. It functions in the pathway amino-acid biosynthesis; L-lysine biosynthesis via DAP pathway; LL-2,6-diaminopimelate from (S)-tetrahydrodipicolinate (succinylase route): step 1/3. This is 2,3,4,5-tetrahydropyridine-2,6-dicarboxylate N-succinyltransferase from Burkholderia pseudomallei (strain 1106a).